The primary structure comprises 311 residues: Vomeronasal type-1 receptor 105 (311 aa).

The Extracellular segment spans residues methionine 1–threonine 17. A helical membrane pass occupies residues phenylalanine 18–phenylalanine 38. Topologically, residues lysine 39–aspartate 50 are cytoplasmic. A helical transmembrane segment spans residues leucine 51–alanine 71. At threonine 72–arginine 94 the chain is on the extracellular side. A disulfide bond links cysteine 86 and cysteine 173. The chain crosses the membrane as a helical span at residues threonine 95 to leucine 115. Residues serine 116–cysteine 135 lie on the Cytoplasmic side of the membrane. A helical transmembrane segment spans residues alanine 136 to isoleucine 156. Residues alanine 157–threonine 188 are Extracellular-facing. N-linked (GlcNAc...) asparagine glycosylation is present at asparagine 160. Residues leucine 189–valine 209 form a helical membrane-spanning segment. Topologically, residues alanine 210–arginine 239 are cytoplasmic. Residues serine 240–serine 260 traverse the membrane as a helical segment. The Extracellular segment spans residues serine 261–serine 271. Residues tyrosine 272 to valine 292 form a helical membrane-spanning segment. The Cytoplasmic portion of the chain corresponds to threonine 293–valine 311.

Belongs to the G-protein coupled receptor 1 family. As to expression, expressed in 1-4% of neurons of the vomeronasal organ. Only one pheromone receptor gene may be expressed in a particular neuron. Not expressed in the main olfactory epithelium.

It is found in the cell membrane. In terms of biological role, putative pheromone receptor implicated in the regulation of social as well as reproductive behavior. The chain is Vomeronasal type-1 receptor 105 (Vom1r105) from Rattus norvegicus (Rat).